The following is a 292-amino-acid chain: tRNA dimethylallyltransferase (292 aa).

5–12 provides a ligand contact to ATP; it reads APTGAGKT. Residue 7–12 participates in substrate binding; that stretch reads TGAGKT. Positions 29–32 are interaction with substrate tRNA; the sequence is DSRQ.

The protein belongs to the IPP transferase family. As to quaternary structure, monomer. Mg(2+) is required as a cofactor.

The enzyme catalyses adenosine(37) in tRNA + dimethylallyl diphosphate = N(6)-dimethylallyladenosine(37) in tRNA + diphosphate. Its function is as follows. Catalyzes the transfer of a dimethylallyl group onto the adenine at position 37 in tRNAs that read codons beginning with uridine, leading to the formation of N6-(dimethylallyl)adenosine (i(6)A). The protein is tRNA dimethylallyltransferase of Leptospira borgpetersenii serovar Hardjo-bovis (strain JB197).